A 132-amino-acid polypeptide reads, in one-letter code: ATP synthase epsilon chain (132 aa).

This sequence belongs to the ATPase epsilon chain family. As to quaternary structure, F-type ATPases have 2 components, CF(1) - the catalytic core - and CF(0) - the membrane proton channel. CF(1) has five subunits: alpha(3), beta(3), gamma(1), delta(1), epsilon(1). CF(0) has three main subunits: a, b and c.

The protein resides in the cell inner membrane. Functionally, produces ATP from ADP in the presence of a proton gradient across the membrane. The sequence is that of ATP synthase epsilon chain from Parvibaculum lavamentivorans (strain DS-1 / DSM 13023 / NCIMB 13966).